The following is a 467-amino-acid chain: Putative sulfoquinovose importer (467 aa).

Helical transmembrane passes span Ile-17 to Leu-37, Ile-54 to Leu-74, Pro-88 to Thr-108, Ala-121 to Ile-141, Gly-160 to Phe-180, Val-185 to Cys-205, Leu-238 to Ile-258, Trp-275 to Val-295, Val-303 to Ser-323, Ser-325 to Leu-345, Ile-379 to Pro-399, and Leu-414 to Tyr-434.

It belongs to the sodium:galactoside symporter (TC 2.A.2) family.

The protein localises to the cell inner membrane. Functionally, could be involved in sulfoquinovose import. The polypeptide is Putative sulfoquinovose importer (yihO) (Escherichia coli (strain K12)).